Consider the following 340-residue polypeptide: Putative methionyl-tRNA formyltransferase (340 aa).

Belongs to the Fmt family.

The protein localises to the mitochondrion. Its subcellular location is the mitochondrion matrix. It is found in the cytoplasm. It carries out the reaction L-methionyl-tRNA(fMet) + (6R)-10-formyltetrahydrofolate = N-formyl-L-methionyl-tRNA(fMet) + (6S)-5,6,7,8-tetrahydrofolate + H(+). In terms of biological role, formylates methionyl-tRNA in mitochondria and the cytoplasm. Responsible for the formylation of the N-terminally formylated (Nt-formylated) mitochondrial matrix proteins that are encoded by mitochondrial DNA. Nt-formylated proteins in the cytoplasm are strongly up-regulated in stationary phase or upon starvation for specific amino acids and are targeted for degradation by an E3 ubiquitin ligase-mediated fMet/N-end rule pathway. Increased Nt-formylation of cytosolic proteins appears to be important for adaptation to these stresses. The protein is Putative methionyl-tRNA formyltransferase (fmt1) of Schizosaccharomyces pombe (strain 972 / ATCC 24843) (Fission yeast).